A 256-amino-acid polypeptide reads, in one-letter code: Protein FixA (256 aa).

This sequence belongs to the ETF beta-subunit/FixA family. In terms of assembly, heterodimer of FixA and FixB.

Its pathway is amine and polyamine metabolism; carnitine metabolism. Required for anaerobic carnitine reduction. May bring reductant to CaiA. In Escherichia coli O139:H28 (strain E24377A / ETEC), this protein is Protein FixA.